We begin with the raw amino-acid sequence, 826 residues long: E3 ubiquitin ligase PARAQUAT TOLERANCE 3 (826 aa).

A DWNN domain is found at I3 to P76. The segment at C203–C216 adopts a CCHC-type zinc-finger fold. Residue S278 is modified to Phosphoserine. The RING-type; degenerate zinc-finger motif lies at C288–C326. 3 stretches are compositionally biased toward polar residues: residues S356–Q365, P396–K406, and N435–P454. Disordered stretches follow at residues S356–K406, N435–Y488, and H585–A826. S397 carries the phosphoserine modification. The segment covering M588 to R624 has biased composition (basic and acidic residues). Polar residues predominate over residues I625–P635. A compositionally biased stretch (basic and acidic residues) spans D651–S667. 2 short sequence motifs (nuclear localization signal) span residues S668–P675 and D695–R702. Basic and acidic residues predominate over residues R680 to R706. A compositionally biased stretch (basic residues) spans F790–R799. Residue S800 is modified to Phosphoserine. The span at G809–A826 shows a compositional bias: basic and acidic residues.

In terms of assembly, interacts with PRMT13/PRMT4B in the nucleus. As to expression, expressed constitutively in both shoot and root tissues.

The protein localises to the nucleus. The catalysed reaction is S-ubiquitinyl-[E2 ubiquitin-conjugating enzyme]-L-cysteine + [acceptor protein]-L-lysine = [E2 ubiquitin-conjugating enzyme]-L-cysteine + N(6)-ubiquitinyl-[acceptor protein]-L-lysine.. E3 ubiquitin ligase acting as a negative regulator of oxidative stress tolerance, probably by mediating 26S proteasome-mediated degradation of PRMT13/PRMT4B, thus preventing APX1 and GPX1 accumulation via the reduction of histone H3 methylation (H3R17me2a). Confers sensitivity to cadmium CdCl(2) and salt NaCl stresses. The polypeptide is E3 ubiquitin ligase PARAQUAT TOLERANCE 3 (Arabidopsis thaliana (Mouse-ear cress)).